We begin with the raw amino-acid sequence, 216 residues long: Cytidylate kinase (216 aa).

Residue 7–15 (GPSGTGKST) participates in ATP binding.

The protein belongs to the cytidylate kinase family. Type 1 subfamily.

It is found in the cytoplasm. The enzyme catalyses CMP + ATP = CDP + ADP. The catalysed reaction is dCMP + ATP = dCDP + ADP. The protein is Cytidylate kinase of Chlamydia trachomatis serovar A (strain ATCC VR-571B / DSM 19440 / HAR-13).